The chain runs to 119 residues: MICOS complex subunit MIC13 (119 aa).

Residues 1–7 lie on the Mitochondrial matrix side of the membrane; the sequence is MVARVWS. The helical transmembrane segment at 8 to 26 threads the bilayer; it reads LMRFLIKGSVAGGAVYLVY. Over 27–119 the chain is Mitochondrial intermembrane; it reads DQELLGPSDK…GWEYLKEHSK (93 aa).

It belongs to the MICOS complex subunit Mic13 family. As to quaternary structure, component of the mitochondrial contact site and cristae organizing system (MICOS) complex, composed of at least MICOS10/MIC10, CHCHD3/MIC19, CHCHD6/MIC25, APOO/MIC26, MICOS13/MIC13, APOOL/MIC27 and IMMT/MIC60. The MICOS complex associates with mitochondrial outer membrane proteins SAMM50, MTX1 and MTX2 (together described as components of the mitochondrial outer membrane sorting assembly machinery (SAM) complex) and DNAJC11, mitochondrial inner membrane protein TMEM11 and with HSPA9. The MICOS and SAM complexes together with DNAJC11 are part of a large protein complex spanning both membranes termed the mitochondrial intermembrane space bridging (MIB) complex.

It localises to the mitochondrion inner membrane. Component of the MICOS complex, a large protein complex of the mitochondrial inner membrane that plays crucial roles in the maintenance of crista junctions, inner membrane architecture, and formation of contact sites to the outer membrane. Constituent of mature MICOS complex, it is required for the formation of cristae junction (CJ) and maintenance of cristae morphology. Required for the incorporation of MICOS10/MIC10 into the MICOS complex. The chain is MICOS complex subunit MIC13 (Micos13) from Mus musculus (Mouse).